Consider the following 231-residue polypeptide: Uridylate kinase (231 aa).

9–12 (KLSG) is an ATP binding site. UMP is bound at residue glycine 49. Glycine 50 and arginine 54 together coordinate ATP. UMP contacts are provided by residues aspartate 69 and 130–137 (AGMPYFST). ATP contacts are provided by asparagine 158, tyrosine 164, and aspartate 167.

Belongs to the UMP kinase family. In terms of assembly, homohexamer.

The protein localises to the cytoplasm. The enzyme catalyses UMP + ATP = UDP + ADP. The protein operates within pyrimidine metabolism; CTP biosynthesis via de novo pathway; UDP from UMP (UMPK route): step 1/1. With respect to regulation, inhibited by UTP. Its function is as follows. Catalyzes the reversible phosphorylation of UMP to UDP. The protein is Uridylate kinase of Tropheryma whipplei (strain Twist) (Whipple's bacillus).